We begin with the raw amino-acid sequence, 183 residues long: UPF0398 protein BLi02355/BL05236 (183 aa).

The protein belongs to the UPF0398 family.

In Bacillus licheniformis (strain ATCC 14580 / DSM 13 / JCM 2505 / CCUG 7422 / NBRC 12200 / NCIMB 9375 / NCTC 10341 / NRRL NRS-1264 / Gibson 46), this protein is UPF0398 protein BLi02355/BL05236.